The sequence spans 396 residues: Elongation factor Tu (396 aa).

A tr-type G domain is found at 10–206; it reads KPHVNVGTIG…TMDSYIPEPV (197 aa). The segment at 19–26 is G1; sequence GHVDHGKT. Residue 19–26 coordinates GTP; it reads GHVDHGKT. Threonine 26 contributes to the Mg(2+) binding site. The interval 60–64 is G2; that stretch reads GITIS. Residues 81–84 form a G3 region; the sequence is DCPG. GTP is bound by residues 81 to 85 and 136 to 139; these read DCPGH and NKAD. The tract at residues 136–139 is G4; it reads NKAD. The tract at residues 174–176 is G5; that stretch reads SAL.

Belongs to the TRAFAC class translation factor GTPase superfamily. Classic translation factor GTPase family. EF-Tu/EF-1A subfamily. As to quaternary structure, monomer.

The protein localises to the cytoplasm. The catalysed reaction is GTP + H2O = GDP + phosphate + H(+). GTP hydrolase that promotes the GTP-dependent binding of aminoacyl-tRNA to the A-site of ribosomes during protein biosynthesis. The protein is Elongation factor Tu of Legionella pneumophila (strain Paris).